Here is a 96-residue protein sequence, read N- to C-terminus: Tenecin-3 (96 aa).

Residues 1–18 (MKTFVICLILVVAVSAAP) form the signal peptide. Residues 19 to 96 (DHHDGHLGGH…HQGGYKTHGH (78 aa)) are disordered. Repeat copies occupy residues 23–26 (GHLG), 31–34 (GHQG), 35–38 (GQQG), 39–42 (GHLG), 43–46 (GQQG), 47–50 (GHLG), 51–54 (GHQG), 59–62 (GHLG), 63–66 (GHQG), 67–70 (GIGG), 77–80 (GQHG), and 86–89 (GHQG). The segment at 23 to 89 (GHLGGHQTGH…GPGTGAGHQG (67 aa)) is 12 X 4 AA repeats of G-X-X-G. A compositionally biased stretch (gly residues) spans 26 to 89 (GGHQTGHQGG…GPGTGAGHQG (64 aa)).

It to H.diomphalia holotricin 3.

The protein resides in the secreted. Antifungal heat stable protein produced in response to injury. It is active against C.albicans. No antibacterial activity against Gram-positive and Gram-negative bacteria. The chain is Tenecin-3 from Tenebrio molitor (Yellow mealworm beetle).